The primary structure comprises 289 residues: Metal-staphylopine import system permease protein CntC (289 aa).

The next 5 helical transmembrane spans lie at 13-33, 77-97, 115-135, 194-214, and 249-269; these read AVIALGIIVLYVFLGLAAPLV, LLYVFVALFVSVLIGSILGFL, VMLAFPSYVVTLALIALFGMG, IAIISSSSMCSMILQISGFSF, and IAIVIIVMAFNFLSDALQIAI. Residues 73–262 form the ABC transmembrane type-1 domain; it reads IRPSLLYVFV…IIVMAFNFLS (190 aa).

It belongs to the binding-protein-dependent transport system permease family. As to quaternary structure, the complex is composed of two ATP-binding proteins (CntD and CntF), two transmembrane proteins (CntB and CntC) and a solute-binding protein (CntA).

Its subcellular location is the cell membrane. Functionally, part of the ABC transporter complex CntABCDF (Opp1) involved in the uptake of metal in complex with the metallophore staphylopine (StP). May be involved in the import of a large array of divalent metals ions such as nickel, cobalt, zinc, copper and iron. Probably responsible for the translocation of the substrate across the membrane. This chain is Metal-staphylopine import system permease protein CntC, found in Staphylococcus aureus (strain Mu50 / ATCC 700699).